A 241-amino-acid chain; its full sequence is IVLHGRAWGELYVARQAGQPVFDRADADFATVLAAVVASGIAQTERLEEVRKLAFTDPLTGLANRRAVDVRLDEAMERHRVDATVVSLVVCDLNGLKAVNDTHGHAVGDRLLERFGSVLSLCGAMLPEALAARLGGDEFCLLTAGPPADAVVGVATELCDRAAVIELGDGVACGVASTGDPIGPVRSARRLFRLADAAQYRAKAARAPGPVVAGRDGEVVRLADSPPKSAHDRRRLRGNRP.

Positions 84–216 constitute a GGDEF domain; that stretch reads TVVSLVVCDL…APGPVVAGRD (133 aa). A disordered region spans residues 215–241; the sequence is RDGEVVRLADSPPKSAHDRRRLRGNRP. Basic residues predominate over residues 231–241; sequence HDRRRLRGNRP.

This is an uncharacterized protein from Streptomyces griseus.